The primary structure comprises 362 residues: Serpentine receptor class delta-2 (362 aa).

A run of 7 helical transmembrane segments spans residues 27-47, 57-77, 104-124, 144-164, 209-229, 264-284, and 292-312; these read LSCL…YLIW, YAIY…ISFF, FCYF…WILL, LIRN…VYVF, LISI…ILYF, GIPI…FGII, and ITFR…IIFV.

The protein belongs to the nematode receptor-like protein srd family.

It is found in the membrane. In terms of biological role, thought to be a chemosensory receptor. The chain is Serpentine receptor class delta-2 (srd-2) from Caenorhabditis elegans.